Reading from the N-terminus, the 456-residue chain is Chitobiosyldiphosphodolichol beta-mannosyltransferase (456 aa).

Over 1–22 (MGEIIKYKGFDHVWQYSGPWLY) the chain is Lumenal. The helical transmembrane segment at 23-43 (CLIGIYISLPVLAYHILPWIF) threads the bilayer. The Cytoplasmic portion of the chain corresponds to 44-103 (HKNRSNKRKTISIFVLGDLGHSPRMCYHASSFSKLDYYVNLCGYVETEPSHQIVDDVNID). An intramembrane region (helical) is located at residues 104–124 (IIPIEAIKNTNNLPYIMFAIL). Residues 125-456 (KVVRQCGKIW…TFSSIFENKS (332 aa)) are Cytoplasmic-facing.

Belongs to the glycosyltransferase group 1 family.

The protein resides in the endoplasmic reticulum membrane. It catalyses the reaction an N,N'-diacetylchitobiosyl-diphospho-di-trans,poly-cis-dolichol + GDP-alpha-D-mannose = a beta-D-Man-(1-&gt;4)-beta-D-GlcNAc-(1-&gt;4)-alpha-D-GlcNAc-diphospho-di-trans,poly-cis-dolichol + GDP + H(+). The protein operates within protein modification; protein glycosylation. Its function is as follows. Participates in the formation of the lipid-linked precursor oligosaccharide for N-glycosylation. Involved in assembling the dolichol-pyrophosphate-GlcNAc(2)-Man(5) intermediate on the cytoplasmic surface of the ER. This is Chitobiosyldiphosphodolichol beta-mannosyltransferase (ALG1) from Candida albicans (strain SC5314 / ATCC MYA-2876) (Yeast).